A 265-amino-acid polypeptide reads, in one-letter code: Hydroxyethylthiazole kinase 2 (265 aa).

Met-39 is a binding site for substrate. Positions 115 and 168 each coordinate ATP. Gly-195 contacts substrate.

It belongs to the Thz kinase family. Mg(2+) is required as a cofactor.

It catalyses the reaction 5-(2-hydroxyethyl)-4-methylthiazole + ATP = 4-methyl-5-(2-phosphooxyethyl)-thiazole + ADP + H(+). It participates in cofactor biosynthesis; thiamine diphosphate biosynthesis; 4-methyl-5-(2-phosphoethyl)-thiazole from 5-(2-hydroxyethyl)-4-methylthiazole: step 1/1. Catalyzes the phosphorylation of the hydroxyl group of 4-methyl-5-beta-hydroxyethylthiazole (THZ). The protein is Hydroxyethylthiazole kinase 2 of Clostridium botulinum (strain Langeland / NCTC 10281 / Type F).